The chain runs to 147 residues: Myoglobin (147 aa).

The Globin domain occupies A2 to K141. H60 provides a ligand contact to nitrite. H60 lines the O2 pocket. H89 lines the heme b pocket.

The protein belongs to the globin family. In terms of assembly, monomeric.

The protein localises to the cytoplasm. It is found in the sarcoplasm. The enzyme catalyses Fe(III)-heme b-[protein] + nitric oxide + H2O = Fe(II)-heme b-[protein] + nitrite + 2 H(+). It carries out the reaction H2O2 + AH2 = A + 2 H2O. Its function is as follows. Monomeric heme protein which primary function is to store oxygen and facilitate its diffusion within muscle tissues. Reversibly binds oxygen through a pentacoordinated heme iron and enables its timely and efficient release as needed during periods of heightened demand. Depending on the oxidative conditions of tissues and cells, and in addition to its ability to bind oxygen, it also has a nitrite reductase activity whereby it regulates the production of bioactive nitric oxide. Under stress conditions, like hypoxia and anoxia, it also protects cells against reactive oxygen species thanks to its pseudoperoxidase activity. This is Myoglobin (mb) from Sarda chiliensis (Pacific bonito).